A 217-amino-acid polypeptide reads, in one-letter code: MOB kinase activator 3A (217 aa).

4 residues coordinate Zn(2+): Cys-83, Cys-88, His-165, and His-170.

This sequence belongs to the MOB1/phocein family.

In terms of biological role, may regulate the activity of kinases. This Homo sapiens (Human) protein is MOB kinase activator 3A (MOB3A).